A 135-amino-acid polypeptide reads, in one-letter code: MAFFKEFREFAMKGNVVDMAVGVIIGAAFGKIVSSLVADVIMPPLGLLIGGIDFKQFSLVLREAHGDIPAVILNYGAFIQTVFDFAIVAFAIFCAIKLINKMRRQEEEQPKAPPAPSAEETLLTEIRDLLKNQQK.

A run of 2 helical transmembrane segments spans residues 10–30 (FAMK…AAFG) and 76–96 (GAFI…FCAI).

Belongs to the MscL family. Homopentamer.

The protein resides in the cell inner membrane. In terms of biological role, channel that opens in response to stretch forces in the membrane lipid bilayer. May participate in the regulation of osmotic pressure changes within the cell. The sequence is that of Large-conductance mechanosensitive channel from Proteus mirabilis (strain HI4320).